Consider the following 198-residue polypeptide: DNA polymerase zeta subunit 2 (198 aa).

In terms of domain architecture, HORMA spans Glu4 to Ile196.

It belongs to the MAD2 family. Accessory subunit of the zeta DNA polymerase complex, which consists of the catalytic component PolZ1/DNApol-zeta and PolZ2/Rev7. Interacts with the apurinic/apyrimidinic (AP) endonuclease Rrp1 (via the N-terminus).

In terms of biological role, as the accessory component of the DNA polymerase zeta complex, involved in translesion DNA synthesis (TLS) and various DNA repair mechanisms. Promotes the apurinic/apyrimidinic (AP) endonuclease activity of Rrp1 and is therefore likely to be involved in the base excision repair (BER) pathway responsible for repair of DNA lesions. It does not appear to influence the synthesis activity of the catalytic component Dmpol-zeta. The polypeptide is DNA polymerase zeta subunit 2 (Drosophila melanogaster (Fruit fly)).